The sequence spans 282 residues: Shikimate dehydrogenase (NADP(+)) (282 aa).

Shikimate is bound by residues 18-20 and Thr65; that span reads SRS. The active-site Proton acceptor is Lys69. Glu81 contacts NADP(+). Residues Asn90 and Asp105 each coordinate shikimate. NADP(+) contacts are provided by residues 130–134, 154–159, and Met222; these read GAGGA and NRTPAR. Tyr224 serves as a coordination point for shikimate. Gly245 serves as a coordination point for NADP(+).

It belongs to the shikimate dehydrogenase family. Homodimer.

It carries out the reaction shikimate + NADP(+) = 3-dehydroshikimate + NADPH + H(+). The protein operates within metabolic intermediate biosynthesis; chorismate biosynthesis; chorismate from D-erythrose 4-phosphate and phosphoenolpyruvate: step 4/7. Functionally, involved in the biosynthesis of the chorismate, which leads to the biosynthesis of aromatic amino acids. Catalyzes the reversible NADPH linked reduction of 3-dehydroshikimate (DHSA) to yield shikimate (SA). The chain is Shikimate dehydrogenase (NADP(+)) from Acidovorax sp. (strain JS42).